A 159-amino-acid polypeptide reads, in one-letter code: MSDEEHHFEPAADAGASKTYPQQAGTIRKNGYIVIKSRPCKVVEVSTSKTGKHGHAKCHFVAIDIFNGKKLEDIVPSSHNCDVPHVNRTDYQLIDISEDGFVSLLTDNGSTKDDLKLPTDDSLLTQIKDGFADGKDLVVSVMSAMGEEQICALKDIGPK.

Over residues 1 to 10 (MSDEEHHFEP) the composition is skewed to basic and acidic residues. A disordered region spans residues 1–21 (MSDEEHHFEPAADAGASKTYP). Hypusine is present on Lys-52.

This sequence belongs to the eIF-5A family. In terms of processing, lys-52 undergoes hypusination, a unique post-translational modification that consists in the addition of a butylamino group from spermidine to lysine side chain, leading to the formation of the unusual amino acid hypusine. eIF-5As are the only known proteins to undergo this modification, which is essential for their function.

Translation factor that promotes translation elongation and termination, particularly upon ribosome stalling at specific amino acid sequence contexts. Binds between the exit (E) and peptidyl (P) site of the ribosome and promotes rescue of stalled ribosome: specifically required for efficient translation of polyproline-containing peptides as well as other motifs that stall the ribosome. Acts as a ribosome quality control (RQC) cofactor by joining the RQC complex to facilitate peptidyl transfer during CAT tailing step. The polypeptide is Eukaryotic translation initiation factor 5A-2 (Medicago sativa (Alfalfa)).